The chain runs to 407 residues: FMN-dependent alpha-hydroxy acid dehydrogenase PB1A11.03 (407 aa).

Positions 28–406 (QRPQITVDGR…DLNRDVLYKE (379 aa)) constitute an FMN hydroxy acid dehydrogenase domain. Residue tyrosine 54 coordinates a 2-oxocarboxylate. Residues serine 136 and glutamine 158 each contribute to the FMN site. An a 2-oxocarboxylate-binding site is contributed by tyrosine 160. Threonine 188 lines the FMN pocket. Arginine 197 contributes to the a 2-oxocarboxylate binding site. Residue lysine 277 coordinates FMN. The active-site Proton acceptor is the histidine 301. Arginine 304 is an a 2-oxocarboxylate binding site. FMN contacts are provided by residues 332-336 (DSGVR) and 355-356 (GR).

Belongs to the FMN-dependent alpha-hydroxy acid dehydrogenase family. FMN serves as cofactor.

Its subcellular location is the cytoplasm. The protein resides in the nucleus. This Schizosaccharomyces pombe (strain 972 / ATCC 24843) (Fission yeast) protein is FMN-dependent alpha-hydroxy acid dehydrogenase PB1A11.03.